The chain runs to 95 residues: Mitochondrial import inner membrane translocase subunit Tim13 (95 aa).

N-acetylmethionine is present on Met-1. Ser-7 is modified (phosphoserine). The short motif at 46–69 (CFRKCIGKPGGSLDNSEQKCIAMC) is the Twin CX3C motif element. 2 disulfides stabilise this stretch: Cys-46-Cys-69 and Cys-50-Cys-65. Lys-53 carries the post-translational modification N6-succinyllysine.

It belongs to the small Tim family. As to quaternary structure, heterohexamer; composed of 3 copies of TIMM8 (TIMM8A or TIMM8B) and 3 copies of TIMM13, named soluble 70 kDa complex. Associates with the TIM22 complex, whose core is composed of TIMM22. In terms of tissue distribution, ubiquitous, with highest expression in heart, kidney, liver and skeletal muscle.

The protein localises to the mitochondrion inner membrane. In terms of biological role, mitochondrial intermembrane chaperone that participates in the import and insertion of some multi-pass transmembrane proteins into the mitochondrial inner membrane. Also required for the transfer of beta-barrel precursors from the TOM complex to the sorting and assembly machinery (SAM complex) of the outer membrane. Acts as a chaperone-like protein that protects the hydrophobic precursors from aggregation and guide them through the mitochondrial intermembrane space. The TIMM8-TIMM13 complex mediates the import of proteins such as TIMM23, SLC25A12/ARALAR1 and SLC25A13/ARALAR2, while the predominant TIMM9-TIMM10 70 kDa complex mediates the import of much more proteins. The sequence is that of Mitochondrial import inner membrane translocase subunit Tim13 (TIMM13) from Homo sapiens (Human).